The following is a 73-amino-acid chain: Translational regulator CsrA (73 aa).

Belongs to the CsrA/RsmA family. In terms of assembly, homodimer; the beta-strands of each monomer intercalate to form a hydrophobic core, while the alpha-helices form wings that extend away from the core.

It is found in the cytoplasm. In terms of biological role, a translational regulator that binds mRNA to regulate translation initiation and/or mRNA stability. Usually binds in the 5'-UTR at or near the Shine-Dalgarno sequence preventing ribosome-binding, thus repressing translation. Its main target seems to be the major flagellin gene, while its function is anatagonized by FliW. The polypeptide is Translational regulator CsrA (Clostridium acetobutylicum (strain ATCC 824 / DSM 792 / JCM 1419 / IAM 19013 / LMG 5710 / NBRC 13948 / NRRL B-527 / VKM B-1787 / 2291 / W)).